The following is a 724-amino-acid chain: Putative mediator of RNA polymerase II transcription subunit 1 (724 aa).

Disordered stretches follow at residues 33–52, 147–167, and 486–524; these read SQQQ…VTSN, QQQQ…PLVE, and HRSS…NENG. Positions 140 to 200 form a coiled coil; it reads YLNQQKEQQQ…QEMTNELNNK (61 aa). 2 stretches are compositionally biased toward low complexity: residues 147-164 and 488-510; these read QQQQ…QPQP and SSQQ…QQQQ. Residues 511-524 show a composition bias toward polar residues; sequence KKLNSVDESMNENG.

The protein belongs to the Mediator complex subunit 1 family. As to quaternary structure, component of the Mediator complex.

It is found in the nucleus. Functionally, component of the Mediator complex, a coactivator involved in the regulated transcription of nearly all RNA polymerase II-dependent genes. Mediator functions as a bridge to convey information from gene-specific regulatory proteins to the basal RNA polymerase II transcription machinery. Mediator is recruited to promoters by direct interactions with regulatory proteins and serves as a scaffold for the assembly of a functional preinitiation complex with RNA polymerase II and the general transcription factors. The chain is Putative mediator of RNA polymerase II transcription subunit 1 (med1) from Dictyostelium discoideum (Social amoeba).